The sequence spans 840 residues: Phosphatidylglycerol lysyltransferase (840 aa).

The Cytoplasmic portion of the chain corresponds to 1–8 (MTQELKSK). A helical transmembrane segment spans residues 9–29 (LLSFFKFIFATALFIFVIFTL). The Extracellular portion of the chain corresponds to 30–52 (YRELSHINFKETFIQFGKINRLW). The helical transmembrane segment at 53 to 73 (LVLLFAGGGLSLILLSLYDII) threads the bilayer. Over 74–89 (LVKALKLKMPLIRVFR) the chain is Cytoplasmic. A helical membrane pass occupies residues 90–110 (VSYIINALNSIIGFGGFIGAG). Residues 111–129 (VRAFVYKNYTNDTKKLVQY) lie on the Extracellular side of the membrane. Residues 130–150 (ISIILVSMLTGLSLLSILVVL) traverse the membrane as a helical segment. Topologically, residues 151 to 161 (RIFNASHMIDE) are cytoplasmic. Residues 162–182 (ISWVRWILYIVALFLPIFIFY) traverse the membrane as a helical segment. The Extracellular portion of the chain corresponds to 183–200 (TVARPVDRNNRYMGVYCT). Residues 201–221 (VVSCVEWMAAATVLYFAALIV) traverse the membrane as a helical segment. The Cytoplasmic segment spans residues 222–229 (DIHISFMT). Residues 230 to 250 (FVGIFVIAALSGLVSFIPGGF) form a helical membrane-spanning segment. The Extracellular segment spans residues 251–270 (GAFDLVVLLGLKSLGISEEK). Residues 271–291 (ILLALVLYRFAYYFVPVMIAL) traverse the membrane as a helical segment. Residues 292–337 (ILSSFEFGNTAKKYLDNSKYFIPVKDFTSFLRSYQKDILAKVPSFS) lie on the Cytoplasmic side of the membrane. The helical transmembrane segment at 338 to 358 (LAILIFLTSIIFFINNLTIVY) threads the bilayer. Residues 359–366 (DGLYDGNH) are Extracellular-facing. A helical membrane pass occupies residues 367–387 (FAYYIALAVQTSACLLLILNV). Residues 388–392 (RGIYK) are Cytoplasmic-facing. Residues 393–413 (GSRRAIIYAFISIILIASATI) traverse the membrane as a helical segment. Topologically, residues 414–415 (YT) are extracellular. Residues 416 to 436 (YASFLLLSWLIIIFVLLILAY) traverse the membrane as a helical segment. Residues 437–450 (QRAQVLKRPLRFKK) are Cytoplasmic-facing. Residues 451 to 471 (LAVMLLLSIFILYLNHILISG) traverse the membrane as a helical segment. Topologically, residues 472–489 (TLYALDVYHIEIDTSLLR) are extracellular. The helical transmembrane segment at 490–510 (YYFWMTIVIIMLLVGVIAWLF) threads the bilayer. Residues 511-840 (DYKYKCPHHS…LKVMRVIRHK (330 aa)) are Cytoplasmic-facing.

Belongs to the LPG synthase family.

It localises to the cell membrane. The catalysed reaction is L-lysyl-tRNA(Lys) + a 1,2-diacyl-sn-glycero-3-phospho-(1'-sn-glycerol) = a 1,2-diacyl-sn-glycero-3-phospho-1'-(3'-O-L-lysyl)-sn-glycerol + tRNA(Lys). In terms of biological role, catalyzes the transfer of a lysyl group from L-lysyl-tRNA(Lys) to membrane-bound phosphatidylglycerol (PG), which produces lysylphosphatidylglycerol (LPG), a major component of the bacterial membrane with a positive net charge. LPG synthesis contributes to bacterial virulence as it is involved in the resistance mechanism against cationic antimicrobial peptides (CAMP) produces by the host's immune system (defensins, cathelicidins) and by the competing microorganisms (bacteriocins). In fact, the modification of anionic phosphatidylglycerol with positively charged L-lysine results in repulsion of the peptides. The sequence is that of Phosphatidylglycerol lysyltransferase (mprF) from Staphylococcus epidermidis (strain ATCC 12228 / FDA PCI 1200).